A 194-amino-acid chain; its full sequence is ATP-dependent Clp protease proteolytic subunit (194 aa).

The active-site Nucleophile is Ser-98. Residue His-123 is part of the active site.

Belongs to the peptidase S14 family. Fourteen ClpP subunits assemble into 2 heptameric rings which stack back to back to give a disk-like structure with a central cavity, resembling the structure of eukaryotic proteasomes.

The protein localises to the cytoplasm. The enzyme catalyses Hydrolysis of proteins to small peptides in the presence of ATP and magnesium. alpha-casein is the usual test substrate. In the absence of ATP, only oligopeptides shorter than five residues are hydrolyzed (such as succinyl-Leu-Tyr-|-NHMec, and Leu-Tyr-Leu-|-Tyr-Trp, in which cleavage of the -Tyr-|-Leu- and -Tyr-|-Trp bonds also occurs).. Functionally, cleaves peptides in various proteins in a process that requires ATP hydrolysis. Has a chymotrypsin-like activity. Plays a major role in the degradation of misfolded proteins. The polypeptide is ATP-dependent Clp protease proteolytic subunit (Staphylococcus carnosus (strain TM300)).